Reading from the N-terminus, the 205-residue chain is MLEVSNLTAIRDERVLFENLQFEIKPGELVQIEGRNGTGKTTLLRIVTGLGDRDEGAIKWKGEAIEKSRDQFHQDLLFLGHQTGVKRELTAFENLRFYQSIHNSDSSSERIFHALTQVGLAGREDVPVAQLSAGQQRRVALARLWLSHQILWILDEPLTAIDKQGVKVLESLFSNHVDNGGIVILTTHQDMFTDSPKLRKIKLGD.

Positions 2–204 constitute an ABC transporter domain; sequence LEVSNLTAIR…SPKLRKIKLG (203 aa). 34–41 contacts ATP; that stretch reads GRNGTGKT.

It belongs to the ABC transporter superfamily. CcmA exporter (TC 3.A.1.107) family. In terms of assembly, the complex is composed of two ATP-binding proteins (CcmA) and two transmembrane proteins (CcmB).

Its subcellular location is the cell inner membrane. The catalysed reaction is heme b(in) + ATP + H2O = heme b(out) + ADP + phosphate + H(+). Its function is as follows. Part of the ABC transporter complex CcmAB involved in the biogenesis of c-type cytochromes; once thought to export heme, this seems not to be the case, but its exact role is uncertain. Responsible for energy coupling to the transport system. This is Cytochrome c biogenesis ATP-binding export protein CcmA from Vibrio vulnificus (strain CMCP6).